Consider the following 187-residue polypeptide: Protein GrpE (187 aa).

Residues 1 to 31 (MEKKETKNDAEKNNKQDNKSTKSQKKENLNL) are disordered.

It belongs to the GrpE family. Homodimer.

It is found in the cytoplasm. Functionally, participates actively in the response to hyperosmotic and heat shock by preventing the aggregation of stress-denatured proteins, in association with DnaK and GrpE. It is the nucleotide exchange factor for DnaK and may function as a thermosensor. Unfolded proteins bind initially to DnaJ; upon interaction with the DnaJ-bound protein, DnaK hydrolyzes its bound ATP, resulting in the formation of a stable complex. GrpE releases ADP from DnaK; ATP binding to DnaK triggers the release of the substrate protein, thus completing the reaction cycle. Several rounds of ATP-dependent interactions between DnaJ, DnaK and GrpE are required for fully efficient folding. This is Protein GrpE from Borrelia garinii subsp. bavariensis (strain ATCC BAA-2496 / DSM 23469 / PBi) (Borreliella bavariensis).